The primary structure comprises 201 residues: Potassium-transporting ATPase KdpC subunit (201 aa).

The chain crosses the membrane as a helical span at residues 12–34 (LLALTMITGLAYPLAVTGLATVL). The tract at residues 69–102 (RPSATVAPDPADSSKTVSAPYNAANSGGSNLGPT) is disordered. Residues 81–101 (SSKTVSAPYNAANSGGSNLGP) are compositionally biased toward polar residues.

The protein belongs to the KdpC family. The system is composed of three essential subunits: KdpA, KdpB and KdpC.

It is found in the cell inner membrane. Part of the high-affinity ATP-driven potassium transport (or Kdp) system, which catalyzes the hydrolysis of ATP coupled with the electrogenic transport of potassium into the cytoplasm. This subunit acts as a catalytic chaperone that increases the ATP-binding affinity of the ATP-hydrolyzing subunit KdpB by the formation of a transient KdpB/KdpC/ATP ternary complex. The protein is Potassium-transporting ATPase KdpC subunit of Rhodopseudomonas palustris (strain TIE-1).